We begin with the raw amino-acid sequence, 502 residues long: Ubiquilin (502 aa).

A Ubiquitin-like domain is found at 8-83 (IKVHVKSPSN…VHLVIRNQAR (76 aa)). Residues 84 to 115 (PTPAPAAATPTASSAPSSNPTPSSQPNPTNNP) show a composition bias toward low complexity. Residues 84-136 (PTPAPAAATPTASSAPSSNPTPSSQPNPTNNPFAAMGGMGSPADILNNPDAMR) are disordered. 2 STI1 domains span residues 124–157 (SPAD…MRTI) and 161–200 (NPQF…FQEM). Polar residues predominate over residues 235 to 251 (SATNSLSGNPFASLRGD). The disordered stretch occupies residues 235 to 294 (SATNSLSGNPFASLRGDQSSEPRVDRAGQENNEALPNPWASNANQATNNQSNNRSADFNS). The segment covering 252–262 (QSSEPRVDRAG) has biased composition (basic and acidic residues). A compositionally biased stretch (low complexity) spans 274-290 (ASNANQATNNQSNNRSA). STI1 domains follow at residues 289 to 327 (SADF…INSI) and 351 to 387 (NPQI…SEAF). The UBA domain maps to 455 to 501 (PVNPEQTYASQLEQLQSMGFSDRARNVAALTATFGDLNAAVERLLNS).

In terms of tissue distribution, expressed in the pharynx, hypodermis, intestine and head neurons. Upon ER stress, expressed predominantly in pharyngeal muscle, hypodermis and intestine.

Its function is as follows. May play a role in the ER-associated protein degradation pathway (ERAD) possibly via its interaction with ER-localized proteins ubxn-4 and cdc-48.1 and/or cdc48.2, providing a link between the polyubiquitinated ERAD substrates and the proteasome. Also plays an important role in the regulation of other protein degradation mechanisms and pathways including ubiquitin-proteasome system (UPS) and autophagy. Mediates the proteasomal targeting of misfolded or accumulated proteins for degradation by binding (via UBA domain) to their polyubiquitin chains and by interacting (via ubiquitin-like domain) with the subunits of the proteasome. Collaborates with POST (F36D4.5) in the export of ubiquitinated proteins from the nucleus to the cytoplasm. Also acts as a regulator of DNA repair by inhibiting homologous recombination repair, thereby redirecting double-strand break repair toward non-homologous end joining (NHEJ). This Caenorhabditis elegans protein is Ubiquilin.